The chain runs to 224 residues: Mammalian ependymin-related protein 1 (224 aa).

The first 37 residues, 1-37 (MPGRAPLHTVPGALGPWLLGCLWAWTLCGLCSLGAVG), serve as a signal peptide directing secretion. Cystine bridges form between Cys42–Cys172, Cys88–Cys222, and Cys113–Cys210. N-linked (GlcNAc...) asparagine glycans are attached at residues Asn130 and Asn182.

Belongs to the ependymin family. Homodimer. In terms of processing, N-glycosylated; the glycan contains mannose-6-phosphate moieties.

It localises to the lysosome lumen. It is found in the secreted. Functionally, binds anionic lipids and gangliosides at acidic pH. The protein is Mammalian ependymin-related protein 1 (EPDR1) of Macaca fascicularis (Crab-eating macaque).